A 104-amino-acid chain; its full sequence is Pterin-4-alpha-carbinolamine dehydratase (104 aa).

Ala-2 is subject to N-acetylalanine. Substrate is bound by residues 61–63 (DHH) and 78–81 (STHE).

It belongs to the pterin-4-alpha-carbinolamine dehydratase family. In terms of assembly, homotetramer and homodimer. Heterotetramer with HNF1A; formed by a dimer of dimers. Interacts with HNF1B (via HNF-p1 domain); the interaction increases HNF1B transactivation activity. Mainly expressed in the liver, in pancreatic cells, and in the kidney, especially in the distal convoluted tubule, in the cortical thick ascending limb of Henle's loop and in the connecting tubule.

It is found in the cytoplasm. The protein resides in the nucleus. It catalyses the reaction (4aS,6R)-4a-hydroxy-L-erythro-5,6,7,8-tetrahydrobiopterin = (6R)-L-erythro-6,7-dihydrobiopterin + H2O. Involved in tetrahydrobiopterin biosynthesis. Seems to both prevent the formation of 7-pterins and accelerate the formation of quinonoid-BH2. Coactivator for HNF1A-dependent transcription. Regulates the dimerization of homeodomain protein HNF1A and enhances its transcriptional activity. Also acts as a coactivator for HNF1B-dependent transcription. The chain is Pterin-4-alpha-carbinolamine dehydratase (Pcbd1) from Mus musculus (Mouse).